The chain runs to 782 residues: Probable cyclic di-GMP phosphodiesterase PdeI (782 aa).

Helical transmembrane passes span 12 to 32 (LIIL…IINY) and 286 to 306 (LFYL…LMTT). The 255-residue stretch at 527 to 781 (NIWIARNIRH…AWDKSGKLVK (255 aa)) folds into the EAL domain.

Its subcellular location is the cell membrane. The enzyme catalyses 3',3'-c-di-GMP + H2O = 5'-phosphoguanylyl(3'-&gt;5')guanosine + H(+). Its function is as follows. Phosphodiesterase (PDE) that catalyzes the hydrolysis of cyclic-di-GMP (c-di-GMP) to 5'-pGpG. Overexpression reduces biofilm formation. Cyclic-di-GMP is a second messenger which controls cell surface-associated traits in bacteria. The polypeptide is Probable cyclic di-GMP phosphodiesterase PdeI (Escherichia coli (strain K12)).